The following is a 237-amino-acid chain: ATP synthase subunit a (237 aa).

5 helical membrane-spanning segments follow: residues 17 to 37 (LSDM…AVAA), 75 to 95 (FLTL…LGLP), 112 to 132 (DATV…YYGV), 179 to 201 (ILLG…GAAI), and 214 to 234 (GTIQ…HKVS).

The protein belongs to the ATPase A chain family. In terms of assembly, F-type ATPases have 2 components, CF(1) - the catalytic core - and CF(0) - the membrane proton channel. CF(1) has five subunits: alpha(3), beta(3), gamma(1), delta(1), epsilon(1). CF(0) has three main subunits: a(1), b(2) and c(9-12). The alpha and beta chains form an alternating ring which encloses part of the gamma chain. CF(1) is attached to CF(0) by a central stalk formed by the gamma and epsilon chains, while a peripheral stalk is formed by the delta and b chains.

The protein localises to the cell membrane. Functionally, key component of the proton channel; it plays a direct role in the translocation of protons across the membrane. The polypeptide is ATP synthase subunit a (Geobacillus kaustophilus (strain HTA426)).